The following is a 307-amino-acid chain: Ribonuclease Z (307 aa).

7 residues coordinate Zn(2+): His63, His65, Asp67, His68, His141, Asp208, and His266. Asp67 (proton acceptor) is an active-site residue.

This sequence belongs to the RNase Z family. Homodimer. It depends on Zn(2+) as a cofactor.

It carries out the reaction Endonucleolytic cleavage of RNA, removing extra 3' nucleotides from tRNA precursor, generating 3' termini of tRNAs. A 3'-hydroxy group is left at the tRNA terminus and a 5'-phosphoryl group is left at the trailer molecule.. Zinc phosphodiesterase, which displays some tRNA 3'-processing endonuclease activity. Probably involved in tRNA maturation, by removing a 3'-trailer from precursor tRNA. This Chlamydia pneumoniae (Chlamydophila pneumoniae) protein is Ribonuclease Z.